The following is a 544-amino-acid chain: MVQEELSLFRITTGYFFLLWYIIILVAAYSGFFEILFNFRNRPILHTKQQANHQNDPESDDEEIYEGVTIIRPIKGIDPELTSCLESSFCQNYPRSKLQILFCVDDPNDPSIPIIQKLIAKYPTVDAQILTSESYNSQTKTSDDHYGPNPKVNNLAKGFVHAKYDILWVMDSNVWASSNILKNSVISLNGNLNMSRKMGQSRPVKLVHHVPLALSINNTTRSDDFIGGQDLEITAMTPVPSSESLNSQLVKRKSSPKSNNSLNVHPGFTYSKFSKKLGAELDEMFLHTSHSKFYVSLNNLAVAPCVNGKSNIYRRSDLDQSVRLIPHKDSPFFKDPKVKQDAGYYTSLGVGHAIKFFARYIGEDNMIGIALWENTQGRTGLTGDVVVQPYSGSENNAVKDYIQRRVRWLRVRKYMVLLATLIEPTTESIICGIYGTYAISTVFFGTWFNKYWFVMHMLIWMLTDYVQYHTLINHTLDVKNITYLPNWLNESIPPKQRNCLQWGYIWILRELLALPIWIIAMIGHEIDWRGRPFRIKKDLTAEEM.

Over 1–15 (MVQEELSLFRITTGY) the chain is Lumenal. A helical transmembrane segment spans residues 16-36 (FFLLWYIIILVAAYSGFFEIL). Residues 37–427 (FNFRNRPILH…LATLIEPTTE (391 aa)) are Cytoplasmic-facing. Asp-109 is a short sequence motif (D1). A short sequence motif (D2) is located at residue Asp-171. Asp-364 is a short sequence motif (D3). Catalysis depends on Asp-364, which acts as the Proton acceptor. A (Q/R)XXRW motif is present at residues 404 to 408 (RRVRW). A helical transmembrane segment spans residues 428 to 448 (SIICGIYGTYAISTVFFGTWF). Topologically, residues 449-451 (NKY) are lumenal. A helical membrane pass occupies residues 452 to 472 (WFVMHMLIWMLTDYVQYHTLI). At 473-501 (NHTLDVKNITYLPNWLNESIPPKQRNCLQ) the chain is on the cytoplasmic side. Residues 502–522 (WGYIWILRELLALPIWIIAMI) form a helical membrane-spanning segment. Topologically, residues 523 to 544 (GHEIDWRGRPFRIKKDLTAEEM) are lumenal.

It belongs to the glycosyltransferase 2 family.

It is found in the golgi apparatus membrane. It carries out the reaction an N-acylsphing-4-enine + UDP-alpha-D-glucose = a beta-D-glucosyl-(1&lt;-&gt;1')-N-acylsphing-4-enine + UDP + H(+). It participates in lipid metabolism; sphingolipid metabolism. Catalyzes the final step in the biosynthesis of the membrane lipid glucosylceramide (GluCer), the transfer of glucose to ceramide. Glucosylceramides play important roles in growth, differentiation and pathogenicity. The protein is Ceramide glucosyltransferase of Candida albicans (strain SC5314 / ATCC MYA-2876) (Yeast).